The sequence spans 749 residues: Probable serine/threonine-protein kinase fhkD (749 aa).

The FHA domain maps to 47–150 (IFFGRNPKRC…NGTFVKGCIL (104 aa)). A compositionally biased stretch (low complexity) spans 84 to 126 (NNNNNDGDNNNNNNNNNNNNNNNNNNNNNNNNNNNNNNNNNNN). The segment at 84–130 (NNNNNDGDNNNNNNNNNNNNNNNNNNNNNNNNNNNNNNNNNNNTTKN) is disordered. The Protein kinase domain maps to 199 to 472 (YSIQGILGTG…TKGALSHDWF (274 aa)). ATP contacts are provided by residues 205-213 (LGTGNFSVV) and K228. The Proton acceptor role is filled by D323. Disordered stretches follow at residues 512 to 620 (NIPM…PAII) and 640 to 749 (CTPT…LKGS). The span at 516 to 561 (TLNSTTTNTTSPNNNNNNNNNNNNKNNNKNIIKSLNSNSNNYNNNS) shows a compositional bias: low complexity. Positions 562–572 (VLKKTSQSPKT) are enriched in polar residues. Composition is skewed to low complexity over residues 590–611 (NNNN…NNNN) and 651–667 (TNST…TSNS). Residues 668–687 (VTMGTSSTSIPVSNSITMKS) show a composition bias toward polar residues. The segment covering 696 to 707 (DGDKKRKEKESS) has biased composition (basic and acidic residues). Residues 708–739 (SSENVNDVIVINSNNHNNNNNNNHNINNGISS) show a composition bias toward low complexity.

The protein belongs to the protein kinase superfamily. CAMK Ser/Thr protein kinase family. CHK2 subfamily.

It catalyses the reaction L-seryl-[protein] + ATP = O-phospho-L-seryl-[protein] + ADP + H(+). The enzyme catalyses L-threonyl-[protein] + ATP = O-phospho-L-threonyl-[protein] + ADP + H(+). This is Probable serine/threonine-protein kinase fhkD (fhkD) from Dictyostelium discoideum (Social amoeba).